Here is a 486-residue protein sequence, read N- to C-terminus: O-methyltransferase gedA (486 aa).

S-adenosyl-L-methionine is bound by residues 298–299 (GG), aspartate 321, 353–354 (SF), and arginine 369. Histidine 373 functions as the Proton acceptor in the catalytic mechanism.

Belongs to the class I-like SAM-binding methyltransferase superfamily. Cation-independent O-methyltransferase family.

The enzyme catalyses emodin + S-adenosyl-L-methionine = questin + S-adenosyl-L-homocysteine + H(+). The protein operates within secondary metabolite biosynthesis. In terms of biological role, O-methyltransferase; part of the gene cluster that mediates the biosynthesis of geodin, an intermediate in the biosynthesis of other natural products. The pathway begins with the synthesis of atrochrysone thioester by the polyketide synthase (PKS) gedC. The atrochrysone carboxyl ACP thioesterase gedB then breaks the thioester bond and releases the atrochrysone carboxylic acid from gedC. The atrochrysone carboxylic acid is then converted to atrochrysone which is further transformed into emodinanthrone. The next step is performed by the emodinanthrone oxygenase gedH that catalyzes the oxidation of emodinanthrone to emodin. Emodin O-methyltransferase encoded probably by gedA then catalyzes methylation of the 8-hydroxy group of emodin to form questin. Ring cleavage of questin by questin oxidase gedK leads to desmethylsulochrin via several intermediates including questin epoxide. Another methylation step probably catalyzed by methyltransferase gedG leads to the formation of sulochrin which is further converted to dihydrogeodin by the sulochrin halogenase gedL. Finally, the dihydrogeodin oxidase gedJ catalyzes the stereospecific phenol oxidative coupling reaction converting dihydrogeodin to geodin. This is O-methyltransferase gedA from Aspergillus terreus (strain NIH 2624 / FGSC A1156).